The primary structure comprises 375 residues: MKWLSRILTVIVTMSMACGALIFNRRHQLKAKTLNFNHKALTIIIPARNEEKRIGHLLHSIIQQQVPVDVIVMNDGSTDETARVARSYGATVVDVVDDTDGKWYGKSHACYQGVTHACTNRIAFVDADVTFLRKDAVETLINQYQLQGEKGLLSVQPYHITKRFYEGFSAIFNLMTVVGMNVFSTLDDGRTNQHAFGPVTLTNKEDYYATGGHKSANRHIIEGFALGSAYTSQSLPVTVYEGFPFVAFRMYQEGFQSLQEGWTKHLSTGAGGTKPKIMTAIVLWLFGSIASILGLCLSLKYRQMSVRKMVALYLSYTTQFIYLHRRVGQFSNLLMVCHPLLFMFFTKIFIQSWKQTHRYGVVEWKGRQYSISKEQ.

The next 4 helical transmembrane spans lie at 3–23, 164–184, 277–297, and 330–350; these read WLSR…ALIF, FYEG…NVFS, IMTA…GLCL, and FSNL…KIFI.

It belongs to the glycosyltransferase 2 family. CrtQ subfamily.

The protein localises to the cell membrane. The protein operates within carotenoid biosynthesis; staphyloxanthin biosynthesis; staphyloxanthin from farnesyl diphosphate: step 4/5. Catalyzes the glycosylation of 4,4'-diaponeurosporenoate, i.e. the esterification of glucose at the C1'' position with the carboxyl group of 4,4'-diaponeurosporenic acid, to form glycosyl-4,4'-diaponeurosporenoate. This is a step in the biosynthesis of staphyloxanthin, an orange pigment present in most staphylococci strains. The protein is 4,4'-diaponeurosporenoate glycosyltransferase (crtQ) of Staphylococcus aureus (strain USA300).